The primary structure comprises 352 residues: Anthranilate phosphoribosyltransferase (352 aa).

5-phospho-alpha-D-ribose 1-diphosphate contacts are provided by residues glycine 83, glycine 86–aspartate 87, threonine 91, asparagine 93–threonine 96, lysine 111–serine 119, and alanine 123. Position 83 (glycine 83) interacts with anthranilate. Mg(2+) is bound at residue serine 95. Residue arginine 169 participates in anthranilate binding. Residues aspartate 228 and glutamate 229 each contribute to the Mg(2+) site.

Belongs to the anthranilate phosphoribosyltransferase family. As to quaternary structure, homodimer. The cofactor is Mg(2+).

It carries out the reaction N-(5-phospho-beta-D-ribosyl)anthranilate + diphosphate = 5-phospho-alpha-D-ribose 1-diphosphate + anthranilate. It functions in the pathway amino-acid biosynthesis; L-tryptophan biosynthesis; L-tryptophan from chorismate: step 2/5. Its function is as follows. Catalyzes the transfer of the phosphoribosyl group of 5-phosphorylribose-1-pyrophosphate (PRPP) to anthranilate to yield N-(5'-phosphoribosyl)-anthranilate (PRA). The sequence is that of Anthranilate phosphoribosyltransferase from Neisseria meningitidis serogroup A / serotype 4A (strain DSM 15465 / Z2491).